The chain runs to 627 residues: Protein fem-1 homolog B (627 aa).

4 ANK repeats span residues 45 to 74, 87 to 116, 120 to 149, and 153 to 182; these read QRST…VQTQ, DGAT…NVNH, TNST…NISI, and YDNT…DPNA. Zn(2+)-binding residues include His185, Cys186, and His218. 2 ANK repeats span residues 186 to 215 and 218 to 248; these read CGAT…AIVV and HGMT…DRRS. The TPR repeat unit spans residues 344–377; sequence SHPIIYRGAVYADNMEFEQCIKLWLHALHLRQKG. ANK repeat units follow at residues 483 to 527 and 531 to 568; these read EGFT…EVNA and EGNS…HTDM.

The protein belongs to the fem-1 family. As to quaternary structure, component of a CRL2 E3 ubiquitin-protein ligase complex, also named ECS (Elongin BC-CUL2/5-SOCS-box protein) complex, composed of CUL2, Elongin BC (ELOB and ELOC), RBX1 and substrate-specific adapter FEM1B. Homooligomer. Interacts with PPM1F and PHTF1. Interacts with the death domain of FAS/TNFRSF6 and TNFRSF1A. Interacts with CHEK1. Interacts with NKX3-1. In terms of tissue distribution, present in adult testis (at protein level).

The protein resides in the cytoplasm. Its subcellular location is the nucleus. The protein operates within protein modification; protein ubiquitination. With respect to regulation, activity of the CRL2(FEM1B) complex toward FNIP1 is inhibited by BEX family proteins (BEX1, BEX2, BEX3 and/or BEX4) in absence of reductive stress. Mechanistically, BEX proteins act as pseudosubstrate inhibitors that associate with FEM1B via zinc in absence of reductive stress, thereby preventing association between FEM1B and FNIP1. Substrate-recognition component of a Cul2-RING (CRL2) E3 ubiquitin-protein ligase complex of the DesCEND (destruction via C-end degrons) pathway, which recognizes a C-degron located at the extreme C terminus of target proteins, leading to their ubiquitination and degradation. The C-degron recognized by the DesCEND pathway is usually a motif of less than ten residues and can be present in full-length proteins, truncated proteins or proteolytically cleaved forms. The CRL2(FEM1B) complex specifically recognizes proteins ending with -Gly-Leu-Asp-Arg, such as CDK5R1, leading to their ubiquitination and degradation. Also acts as a regulator of the reductive stress response by mediating ubiquitination of reduced FNIP1: in response to reductive stress, the CRL2(FEM1B) complex specifically recognizes a conserved Cys degron in FNIP1 when this degron is reduced, leading to FNIP1 degradation and subsequent activation of mitochondria to recalibrate reactive oxygen species (ROS). Mechanistically, recognizes and binds reduced FNIP1 through two interface zinc ions, which act as a molecular glue that recruit reduced FNIP1 to FEM1B. Promotes ubiquitination of GLI1, suppressing GLI1 transcriptional activator activity. Promotes ubiquitination and degradation of ANKRD37. Promotes ubiquitination and degradation of SLBP. Involved in apoptosis by acting as a death receptor-associated protein that mediates apoptosis. Also involved in glucose homeostasis in pancreatic islet. May also act as an adapter/mediator in replication stress-induced signaling that leads to the activation of CHEK1. This is Protein fem-1 homolog B from Rattus norvegicus (Rat).